A 1769-amino-acid chain; its full sequence is MSSLSDQLAQVASNNATVALDRKRRQKLHSASLIYNSKTAATQDYDFIFENASKALEELSQIEPKFAIFSRTLFSESSISLDRNVQTKEEIKDLDNAINAYLLLASSKWYLAPTLHATEWLVRRFQIHVKNTEMLLLSTLNYYQTPVFKRILSIIKLPPLFNCLSNFVRSEKPPTALTMIKLFNDMDFLKLYTSYLDQCIKHNATYTNQLLFTTCCFINVVAFNSNNDEKLNQLVPILLEISAKLLASKSKDCQIAAHTILVVFATALPLKKTIILAAMETILSNLDAKEAKHSALLTICKLFQTLKGQGNVDQLPSKIFKLFDSKFDTVSILTFLDKEDKPVCDKFITSYTRSIARYDRSKLNIILSLLKKIRLERYEVRLIITDLIYLSEILEDKSQLVELFEYFISINEDLVLKCLKSLGLTGELFEIRLTTSLFTNADVNTDIVKQLSDPVETTKKDTASFQTFLDKHSELINTTNVSMLTETGERYKKVLSLFTEAIGKGYKASSFLTSFFTTLESRITFLLRVTISPAAPTALKLISLNNIAKYINSIEKEVNIFTLVPCLICALRDASIKVRTGVKKILSLIAKRPSTKHYFLSDKLYGENVTIPMLNPKDSEAWLSGFLNEYVTENYDISRILTPKRNEKVFLMFWANQALLIPSPYAKTVLLDNLNKSPTYASSYSSLFEEFISHYLENRSSWEKSCIANKTNFEHFERSLVNLVSPKEKQSFMIDFVLSALNSDYEQLANIAAERLISIFASLNNAQKLKIVQNIVDSSSNVESSYDTVGVLQSLPLDSDIFVSILNQNSISNEMDQTDFSKRRRRRSSTSKNAFLKEEVSQLAELHLRKLTIILEALDKVRNVGSEKLLFTLLSLLSDLETLDQDGGLPVLYAQETLISCTLNTITYLKEHGCTELTNVRADILVSAIRNSASPQVQNKLLLVIGSLATLSSEVILHSVMPIFTFMGAHSIRQDDEFTTKVVERTILTVVPALIKNSKGNEKEEMEFLLLSFTTALQHVPRHRRVKLFSTLIKTLDPVKALGSFLFLIAQQYSSALVNFKIGEARILIEFIKALLVDLHVNEELSGLNDLLDIIKLLTSSKSSSEKKKSLESRVLFSNGVLNFSESEFLTFMNNTFEFINKITEETDQDYYDVRRNLRLKVYSVLLDETSDKKLIRNIREEFGTLLEGVLFFINSVELTFSCITSQENEEASDSETSLSDHTTEIKEILFKVLGNVLQILPVDEFVNAVLPLLSTSTNEDIRYHLTLVIGSKFELEGSEAIPIVNNVMKVLLDRMPLESKSVVISQVILNTMTALVSKYGKKLEGSILTQALTLATEKVSSDMTEVKISSLALITNCVQVLGVKSIAFYPKIVPPSIKLFDASLADSSNPLKEQLQVAILLLFAGLIKRIPSFLMSNILDVLHVIYFSREVDSSIRLSVISLIIENIDLKEVLKVLFRIWSTEIATSNDTVAVSLFLSTLESTVENIDKKSATSQSPIFFKLLLSLFEFRSISSFDNNTISRIEASVHEISNSYVLKMNDKVFRPLFVILVRWAFDGEGVTNAGITETERLLAFFKFFNKLQENLRGIITSYFTYLLEPVDMLLKRFISKDMENVNLRRLVINSLTSSLKFDRDEYWKSTSRFELISVSLVNQLSNIENSIGKYLVKAIGALASNNSGVDEHNQILNKLIVEHMKASCSSNEKLWAIRAMKLIYSKIGESWLVLLPQLVPVIAELLEDDDEEIEREVRTGLVKVVENVLGEPFDRYLD.

Serine 2 bears the N-acetylserine mark. The stretch at 1729 to 1767 (LVPVIAELLEDDDEEIEREVRTGLVKVVENVLGEPFDRY) is one HEAT repeat.

This sequence belongs to the HEATR1/UTP10 family. In terms of assembly, interacts with snoRNA U3. Interacts with MPP10. Component of the ribosomal small subunit (SSU) processome composed of at least 40 protein subunits and snoRNA U3. In the absence of snoRNA3, forms a complex with other t-UTPs. This complex can associate with pre-18S ribosomal RNAs.

It is found in the nucleus. Its subcellular location is the nucleolus. The protein resides in the mitochondrion. Involved in nucleolar processing of pre-18S ribosomal RNA. Required for optimal pre-ribosomal RNA transcription by RNA polymerase I together with a subset of U3 proteins required for transcription (t-UTPs). Involved in ribosome biosynthesis. This is U3 small nucleolar RNA-associated protein 10 (UTP10) from Saccharomyces cerevisiae (strain ATCC 204508 / S288c) (Baker's yeast).